An 876-amino-acid chain; its full sequence is Dynein regulatory complex subunit 7 (876 aa).

Coiled coils occupy residues 1–33 and 258–295; these read MEVLREKVEEEEEAEREEAAERAERTEKLERVT and KFEQEQEEKRIQEIKDLEQRRLKEEEDRILEAEKAKPD. A disordered region spans residues 1-40; it reads MEVLREKVEEEEEAEREEAAERAERTEKLERVTKSAEVSR. Residues 17 to 40 are compositionally biased toward basic and acidic residues; sequence EEAAERAERTEKLERVTKSAEVSR. The segment at 385-412 is disordered; that stretch reads SLTEEDEEGLDDDDDDVEDLGKEEEDKS. The span at 387–407 shows a compositional bias: acidic residues; it reads TEEDEEGLDDDDDDVEDLGKE. Coiled-coil stretches lie at residues 679–710 and 784–809; these read QLKNEEKLSRHQAWESELEVLEILKLREEEEE and QRLIDKANLIQARFEKETQELQKKQQ.

The protein belongs to the DRC7 family. Component of the nexin-dynein regulatory complex (N-DRC). Interacts with TCTE1/DRC5. Interacts with DRC3 and GAS8/DRC4. In terms of tissue distribution, expressed in diplotene and pachytene spermytocytes, and in round and elongating spermatids (at protein level). Strongly expressed in spleen and testis, faintly expressed in kidney, ovary and thymus. As to expression, abundantly expressed in the testis and is weakly expressed in the brain, thymus, lung and ovary. Expressed in ciliated cells.

The protein resides in the cell projection. Its subcellular location is the cilium. It is found in the flagellum. The protein localises to the cytoplasm. It localises to the cytoskeleton. The protein resides in the cilium axoneme. Its subcellular location is the flagellum axoneme. Functionally, component of the nexin-dynein regulatory complex (N-DRC) a key regulator of ciliary/flagellar motility which maintains the alignment and integrity of the distal axoneme and regulates microtubule sliding in motile axonemes. Essential for male fertility, sperm head morphogenesis and sperm flagellum formation. Not required for ciliogenesis in the brain and trachea. This chain is Dynein regulatory complex subunit 7 (Drc7), found in Mus musculus (Mouse).